The primary structure comprises 89 residues: Small ribosomal subunit protein uS15 (89 aa).

This sequence belongs to the universal ribosomal protein uS15 family. Part of the 30S ribosomal subunit. Forms a bridge to the 50S subunit in the 70S ribosome, contacting the 23S rRNA.

Its function is as follows. One of the primary rRNA binding proteins, it binds directly to 16S rRNA where it helps nucleate assembly of the platform of the 30S subunit by binding and bridging several RNA helices of the 16S rRNA. In terms of biological role, forms an intersubunit bridge (bridge B4) with the 23S rRNA of the 50S subunit in the ribosome. This chain is Small ribosomal subunit protein uS15, found in Streptococcus equi subsp. zooepidemicus (strain H70).